The chain runs to 636 residues: Eisosome protein sle1 (636 aa).

Residues 1-297 (MSHASKNYNA…HVIIYENKEG (297 aa)) form a required for targeting the protein to eisosomes region. Disordered stretches follow at residues 111-205 (ANYM…SPAN), 222-284 (YSPS…VPPV), 313-387 (DPSG…TQHF), 400-451 (QYYQ…QPSL), 467-550 (DITP…VNNA), and 572-604 (PSNH…RFAN). 5 stretches are compositionally biased toward polar residues: residues 131 to 159 (PSQQ…QSYQ), 166 to 178 (RTSQ…NNYS), 188 to 204 (RRSS…GSPA), 237 to 255 (SYNN…TQKS), and 315 to 354 (SGSN…VVSR). Residues 355–383 (SGQNNNQPAQPGQYNQQSQPVQSYQSGQS) show a composition bias toward low complexity. 2 stretches are compositionally biased toward polar residues: residues 400–412 (QYYQ…QPVQ) and 422–439 (PVQS…QPVQ). Low complexity predominate over residues 471 to 484 (TASSTTANNAYASA). The segment covering 503-512 (SFERERDSGR) has biased composition (basic and acidic residues). Polar residues predominate over residues 572 to 589 (PSNHAYSEGRSYTFTGGQ).

In terms of assembly, component of eisosomes, large cytoplasmic protein assemblies that localize to specialized domains termed MCCs on the plasma membrane.

It localises to the cytoplasm. Its subcellular location is the cell cortex. It is found in the cell tip. Functionally, important for the biogenesis of filamentous eisosomes, large cytoplasmic protein assemblies that localize to specialized domains on the plasma membrane to cluster specific proteins at sites of membrane invaginations. The protein is Eisosome protein sle1 (sle1) of Schizosaccharomyces pombe (strain 972 / ATCC 24843) (Fission yeast).